A 228-amino-acid chain; its full sequence is L-ribulose-5-phosphate 4-epimerase UlaF (228 aa).

Substrate contacts are provided by residues 26-27, 43-44, and 72-73; these read GN, SG, and SS. The Zn(2+) site is built by Asp-74, His-93, and His-95. Asp-118 (proton donor/acceptor) is an active-site residue. His-167 is a Zn(2+) binding site. The active-site Proton donor/acceptor is the Tyr-225.

Belongs to the aldolase class II family. AraD/FucA subfamily. It depends on Zn(2+) as a cofactor.

It carries out the reaction L-ribulose 5-phosphate = D-xylulose 5-phosphate. Its pathway is cofactor degradation; L-ascorbate degradation; D-xylulose 5-phosphate from L-ascorbate: step 4/4. Functionally, catalyzes the isomerization of L-ribulose 5-phosphate to D-xylulose 5-phosphate. Is involved in the anaerobic L-ascorbate utilization. The polypeptide is L-ribulose-5-phosphate 4-epimerase UlaF (Escherichia coli (strain SMS-3-5 / SECEC)).